Reading from the N-terminus, the 121-residue chain is uncharacterized protein (121 aa).

The stretch at 8–37 forms a coiled coil; sequence KQLMVCRDEIKKLKLKEKEAKNRILTYLKN.

This is an uncharacterized protein from Aedes vexans (Inland floodwater mosquito).